The chain runs to 216 residues: Thymidine kinase (216 aa).

ATP-binding positions include 9 to 16 (GTMDCGKS) and 86 to 89 (DEAQ). The active-site Proton acceptor is Glu-87.

Belongs to the thymidine kinase family. As to quaternary structure, homotetramer.

It localises to the cytoplasm. The enzyme catalyses thymidine + ATP = dTMP + ADP + H(+). The chain is Thymidine kinase from Streptomyces avermitilis (strain ATCC 31267 / DSM 46492 / JCM 5070 / NBRC 14893 / NCIMB 12804 / NRRL 8165 / MA-4680).